A 203-amino-acid chain; its full sequence is GTP-binding protein ypt1 (203 aa).

GTP is bound by residues 15-23 (GDSGVGKSC), 33-40 (YTESYIST), 63-67 (DTAGQ), 121-124 (NKSD), and 151-153 (SAK). Positions 37 to 45 (YISTIGVDF) match the Effector region motif. The disordered stretch occupies residues 180–203 (NNTKASVNVSPGHGVSNNSSGGCC). Residues cysteine 202 and cysteine 203 are each lipidated (S-geranylgeranyl cysteine).

It belongs to the small GTPase superfamily. Rab family.

It localises to the endoplasmic reticulum membrane. It is found in the golgi apparatus membrane. Its subcellular location is the cytoplasm. The protein resides in the preautophagosomal structure membrane. With respect to regulation, rab activation is generally mediated by a guanine exchange factor (GEF), while inactivation through hydrolysis of bound GTP is catalyzed by a GTPase activating protein (GAP). In terms of biological role, the small GTPases Rab are key regulators of intracellular membrane trafficking, from the formation of transport vesicles to their fusion with membranes. Rabs cycle between an inactive GDP-bound form and an active GTP-bound form that is able to recruit to membranes different set of downstream effectors directly responsible for vesicle formation, movement, tethering and fusion. Ypt-1 regulates the trafficking of secretory vesicles from the endoplasmic reticulum (ER) to the Golgi. Plays a role in the initial events of the autophagic vacuole development which take place at specialized regions of the endoplasmic reticulum. Also involved in the recycling of membrane proteins. This chain is GTP-binding protein ypt1 (ypt-1), found in Neurospora crassa (strain ATCC 24698 / 74-OR23-1A / CBS 708.71 / DSM 1257 / FGSC 987).